The sequence spans 113 residues: Cell division protein FtsB (113 aa).

The Cytoplasmic segment spans residues 1–3; it reads MRL. The chain crosses the membrane as a helical span at residues 4-21; that stretch reads ISLLLFVLLLAIQYPLWL. At 22–113 the chain is on the periplasmic side; that stretch reads GKGGWLRVWD…PNSVAGRGGH (92 aa). Residues 34 to 64 adopt a coiled-coil conformation; sequence RQVNEQTVHNQALKLRNAKLEGEVKDLQDGT. The interval 93 to 113 is disordered; the sequence is KVSATPPLPPPPNSVAGRGGH.

The protein belongs to the FtsB family. In terms of assembly, part of a complex composed of FtsB, FtsL and FtsQ.

Its subcellular location is the cell inner membrane. In terms of biological role, essential cell division protein. May link together the upstream cell division proteins, which are predominantly cytoplasmic, with the downstream cell division proteins, which are predominantly periplasmic. This chain is Cell division protein FtsB, found in Cupriavidus metallidurans (strain ATCC 43123 / DSM 2839 / NBRC 102507 / CH34) (Ralstonia metallidurans).